The following is a 1223-amino-acid chain: Glycerophosphocholine phosphodiesterase GDE1 (1223 aa).

In terms of domain architecture, SPX spans 1 to 213 (MKFGKTFANH…GTNQQMSTMK (213 aa)). Residues 43-59 (HNKNSYDEGRPPTKMRD) are compositionally biased toward basic and acidic residues. Positions 43–64 (HNKNSYDEGRPPTKMRDSSNSA) are disordered. ANK repeat units follow at residues 427–456 (YKRT…EWNI), 472–502 (ESLT…NVKL), 504–533 (SSSL…DINY), 538–567 (LHET…DLEI), 572–601 (FGWT…NFDI), and 605–634 (GGWT…LVTH). Phosphoserine is present on Ser-653. Residues 872–1217 (TRVIGHRGLG…DSVLAIRRGL (346 aa)) enclose the GP-PDE domain. Residues Glu-911, Asp-913, and His-926 each contribute to the a divalent metal cation site. At Ser-983 the chain carries Phosphoserine.

The protein belongs to the GDE1 family. The cofactor is a divalent metal cation.

It is found in the cytoplasm. It catalyses the reaction sn-glycerol 3-phosphocholine + H2O = sn-glycerol 3-phosphate + choline + H(+). It carries out the reaction sn-glycero-3-phospho-1D-myo-inositol + H2O = myo-inositol + sn-glycerol 3-phosphate + H(+). Its function is as follows. Glycerophosphocholine glycerophosphodiesterase responsible for the hydrolysis of intracellular glycerophosphocholine into glycerol-phosphate and choline. The choline is used for phosphatidyl-choline synthesis. Required for utilization of glycerophosphocholine as phosphate source. May also use glycerophosphoinositol as substrate in vivo. The polypeptide is Glycerophosphocholine phosphodiesterase GDE1 (Saccharomyces cerevisiae (strain ATCC 204508 / S288c) (Baker's yeast)).